The primary structure comprises 241 residues: Probable cobalt-factor III C(17)-methyltransferase (241 aa).

It belongs to the precorrin methyltransferase family.

It carries out the reaction Co(II)-factor III + S-adenosyl-L-methionine + H(+) = Co(II)-factor IV + S-adenosyl-L-homocysteine. The protein operates within cofactor biosynthesis; adenosylcobalamin biosynthesis; cob(II)yrinate a,c-diamide from sirohydrochlorin (anaerobic route): step 3/10. In terms of biological role, methyltransferase that likely catalyzes the ring contraction and methylation of C-17 in cobalt-factor III to form cobalt-factor IV. May also convert cobalt-precorrin-3 to cobalt-precorrin-4. This is Probable cobalt-factor III C(17)-methyltransferase (cbiH) from Salmonella typhimurium (strain LT2 / SGSC1412 / ATCC 700720).